We begin with the raw amino-acid sequence, 256 residues long: tRNA pseudouridine synthase A (256 aa).

Residue Asp49 is the Nucleophile of the active site. Tyr104 contacts substrate.

Belongs to the tRNA pseudouridine synthase TruA family.

It carries out the reaction uridine(38/39/40) in tRNA = pseudouridine(38/39/40) in tRNA. Formation of pseudouridine at positions 38, 39 and 40 in the anticodon stem and loop of transfer RNAs. In Methanopyrus kandleri (strain AV19 / DSM 6324 / JCM 9639 / NBRC 100938), this protein is tRNA pseudouridine synthase A.